The primary structure comprises 377 residues: tRNA pseudouridine synthase Pus10 (377 aa).

Asp206 (nucleophile) is an active-site residue. 2 residues coordinate substrate: Tyr270 and Tyr339.

It belongs to the pseudouridine synthase Pus10 family.

It catalyses the reaction uridine(54) in tRNA = pseudouridine(54) in tRNA. The catalysed reaction is uridine(55) in tRNA = pseudouridine(55) in tRNA. Its function is as follows. Responsible for synthesis of pseudouridine from uracil-54 and uracil-55 in the psi GC loop of transfer RNAs. This chain is tRNA pseudouridine synthase Pus10, found in Picrophilus torridus (strain ATCC 700027 / DSM 9790 / JCM 10055 / NBRC 100828 / KAW 2/3).